We begin with the raw amino-acid sequence, 2224 residues long: Myomegalin (2224 aa).

4 coiled-coil regions span residues 41–97, 162–205, 236–318, and 350–682; these read REDV…RQQE, DQYS…LLEE, VSES…REML, and CSQL…ALRQ. A disordered region spans residues 206–236; the sequence is PASMEVQPVPKGLPTQQKPDLHETPTTQPPV. Polar residues predominate over residues 219 to 236; the sequence is PTQQKPDLHETPTTQPPV. The segment at 703–751 is disordered; that stretch reads GVTSIGPHHGEQTDQGSMQMPSRDDSTSLTAREEASIPRSTLGDSDTVA. Residue Thr705 is modified to Phosphothreonine. A compositionally biased stretch (basic and acidic residues) spans 724-738; the sequence is SRDDSTSLTAREEAS. Coiled coils occupy residues 745–822, 856–886, and 949–986; these read GDSD…QLVD, NKRQ…RQLY, and AQEM…AGFS. Disordered stretches follow at residues 1098–1128, 1141–1161, and 1270–1298; these read TGLP…SLPL, NKSQ…GSTK, and VSPP…DDSS. Positions 1112–1124 are enriched in polar residues; that stretch reads ENTTTARPGSRPQ. Coiled-coil stretches lie at residues 1159–1187, 1295–1331, and 1377–1401; these read STKH…SEAT, DDSS…LSAT, and GLQA…LPKT. Positions 1276-1298 are enriched in basic and acidic residues; sequence KPLENKPGKQEEFRAHGTPDDSS. The Olduvai domain occupies 1497–1588; that stretch reads KDHKSEKEEA…DEKKPSPSHS (92 aa). Disordered regions lie at residues 1576–1637, 1736–1757, 1805–1824, and 1962–2001; these read THYD…SLSQ, SSGQ…LSSG, LSST…QGLE, and KASL…LNSP. The segment covering 1599–1609 has biased composition (polar residues); sequence ESSSSPISLPT. A compositionally biased stretch (low complexity) spans 1748–1757; sequence GSVSGELSSG. Residues 1769 to 1958 adopt a coiled-coil conformation; the sequence is GADLLEEHLG…RLQLEQQMDR (190 aa). Residues 2148 to 2191 are a coiled coil; it reads KEGQLMEKELLDLRAQVSQQEQILQNTAARLKRANQRKKSMEQF.

In terms of assembly, interacts with PDE4D. Isoform 2 interacts with MAPRE1 and MAPRE3. Isoform 2 forms a pericentrosomal complex with AKAP9, CDK5RAP2 and EB1/MAPRE1; within this complex, may mediate MAPRE1-binding to CDK5RAP2. Interaction with AKAP9 stabilizes both proteins. Isoform 2 interacts (via N-terminus) with CAMSAP2; this interaction is much stronger in the presence of AKAP9. In complex with AKAP9, Isoform 2 recruits CAMSAP2 to the Golgi apparatus. Isoform 2 interacts with unglycosylated LGALS3BP; this interaction may connect the pericentrosomal complex to the gamma-tubulin ring complex (gamma-TuRC) to promote microtubule assembly and acetylation.

The protein localises to the cytoplasm. It localises to the cytoskeleton. The protein resides in the microtubule organizing center. It is found in the centrosome. Its subcellular location is the golgi apparatus. Its function is as follows. Functions as an anchor sequestering components of the cAMP-dependent pathway to Golgi and/or centrosomes. In terms of biological role, participates in microtubule dynamics, promoting microtubule assembly. Depending upon the cell context, may act at the level of the Golgi apparatus or that of the centrosome. In complex with AKAP9, recruits CAMSAP2 to the Golgi apparatus and tethers non-centrosomal minus-end microtubules to the Golgi, an important step for polarized cell movement. In complex with AKAP9, EB1/MAPRE1 and CDK5RAP2, contributes to microtubules nucleation and extension from the centrosome to the cell periphery, a crucial process for directed cell migration, mitotic spindle orientation and cell-cycle progression. In Mus musculus (Mouse), this protein is Myomegalin (Pde4dip).